Here is a 270-residue protein sequence, read N- to C-terminus: uncharacterized protein (270 aa).

2 stretches are compositionally biased toward basic and acidic residues: residues 1–13 (MSEF…KDLY) and 49–73 (EVER…KEEK). 3 disordered regions span residues 1–76 (MSEF…KQEE), 90–111 (STSP…PQTE), and 204–270 (KKRR…FRTE). The span at 90–102 (STSPAQEEQGSST) shows a compositional bias: polar residues. A compositionally biased stretch (basic residues) spans 204-216 (KKRRPGQKQRAAK). The span at 218–235 (LALERTKERDTKAREIKK) shows a compositional bias: basic and acidic residues. Residues 236–253 (QLKKKFHKRGGKKNKKKV) are compositionally biased toward basic residues.

This is an uncharacterized protein from Saccharomyces cerevisiae (strain ATCC 204508 / S288c) (Baker's yeast).